Consider the following 216-residue polypeptide: MLSLTAHLVLISTIIVKCSAFSKKPSERAKPAAVKKAVEDKQPVKVTAFEQASLNEDKAEAMSNIEPSPKISNSTVPTAPTPKKEKKVVATTKKTERSVAQGPPLVSEHIKDEKKMPSVHKPIRKGSIYANELLTEKPLTDTEPELHPDNHVVKAKSPKPVARTPTARHRNALKPGKINDKSDDTLHDAPSIQKVGGPSYEDAASVNEKEKDVNPK.

The tract at residues 55 to 216 (NEDKAEAMSN…NEKEKDVNPK (162 aa)) is disordered. 3 stretches are compositionally biased toward basic and acidic residues: residues 134 to 152 (LTEKPLTDTEPELHPDNHV), 177 to 187 (KINDKSDDTLH), and 207 to 216 (NEKEKDVNPK).

This is an uncharacterized protein from Caenorhabditis elegans.